Consider the following 289-residue polypeptide: Homoserine kinase (289 aa).

ATP is bound at residue 79 to 89; that stretch reads PLARGLGSSSS.

The protein belongs to the GHMP kinase family. Homoserine kinase subfamily.

Its subcellular location is the cytoplasm. It carries out the reaction L-homoserine + ATP = O-phospho-L-homoserine + ADP + H(+). It participates in amino-acid biosynthesis; L-threonine biosynthesis; L-threonine from L-aspartate: step 4/5. Functionally, catalyzes the ATP-dependent phosphorylation of L-homoserine to L-homoserine phosphate. The sequence is that of Homoserine kinase from Streptococcus pneumoniae (strain Taiwan19F-14).